Consider the following 122-residue polypeptide: Small ribosomal subunit protein bS6 (122 aa).

The interval 97 to 122 is disordered; that stretch reads TAPSPMMKAVQKEDAAKSHRAEAPAA. The segment covering 106–122 has biased composition (basic and acidic residues); it reads VQKEDAAKSHRAEAPAA.

It belongs to the bacterial ribosomal protein bS6 family.

Its function is as follows. Binds together with bS18 to 16S ribosomal RNA. This Janthinobacterium sp. (strain Marseille) (Minibacterium massiliensis) protein is Small ribosomal subunit protein bS6.